A 594-amino-acid polypeptide reads, in one-letter code: Laccase-2 (594 aa).

Residues 1-20 (MGGIIKLSFLFCSLISLVNS) form the signal peptide. The N-linked (GlcNAc...) asparagine glycan is linked to N67. Plastocyanin-like domains are found at residues 70 to 183 (EALA…HSPN) and 195 to 357 (DRIV…RYTG). 2 residues coordinate Cu cation: H117 and H119. The N-linked (GlcNAc...) asparagine glycan is linked to N124. A disulfide bridge connects residues C138 and C578. H162 and H164 together coordinate Cu cation. N-linked (GlcNAc...) asparagine glycosylation is found at N242, N286, N320, N358, N397, N430, N452, and N458. One can recognise a Plastocyanin-like 3 domain in the interval 466–563 (PVNIIINNLD…KMAVVVVQPE (98 aa)). H480, H483, and H485 together coordinate Cu cation. A glycan (N-linked (GlcNAc...) asparagine) is linked at N508. Cu cation-binding residues include H543, C544, H545, and H549.

This sequence belongs to the multicopper oxidase family. Cu cation serves as cofactor.

It is found in the secreted. It localises to the cell wall. The catalysed reaction is 4 hydroquinone + O2 = 4 benzosemiquinone + 2 H2O. In terms of biological role, laccase that catalyzes the oxidation of certain aromatic compounds, including L-dopa, to quinones, which then polymerize to melanin. Able to oxidize a wide variety of aromatic diphenol and diamino groups in the ortho, meta, and para positions but not monophenolic groups such as in phenol, tyramine, or tyrosine. Plays an important role in virulence. Plays a role in dissemination to extrapulmonary sites but is not involved in pulmonary growth or in elicitation of cellular immune responses in the lung. The sequence is that of Laccase-2 (LAC2) from Cryptococcus neoformans var. grubii serotype A (strain H99 / ATCC 208821 / CBS 10515 / FGSC 9487) (Filobasidiella neoformans var. grubii).